The sequence spans 403 residues: L-cysteine:1D-myo-inositol 2-amino-2-deoxy-alpha-D-glucopyranoside ligase (403 aa).

C43 provides a ligand contact to Zn(2+). L-cysteinyl-5'-AMP is bound by residues C43–T46, T58, N81–T83, and W223. The 'HIGH' region signature appears at I45 to H55. Position 227 (C227) interacts with Zn(2+). G245 to D247 is a binding site for L-cysteinyl-5'-AMP. H252 is a Zn(2+) binding site. V278 provides a ligand contact to L-cysteinyl-5'-AMP. A 'KMSKS' region motif is present at residues K284–S288.

It belongs to the class-I aminoacyl-tRNA synthetase family. MshC subfamily. In terms of assembly, monomer. Zn(2+) is required as a cofactor.

It catalyses the reaction 1D-myo-inositol 2-amino-2-deoxy-alpha-D-glucopyranoside + L-cysteine + ATP = 1D-myo-inositol 2-(L-cysteinylamino)-2-deoxy-alpha-D-glucopyranoside + AMP + diphosphate + H(+). In terms of biological role, catalyzes the ATP-dependent condensation of GlcN-Ins and L-cysteine to form L-Cys-GlcN-Ins. The sequence is that of L-cysteine:1D-myo-inositol 2-amino-2-deoxy-alpha-D-glucopyranoside ligase from Acidothermus cellulolyticus (strain ATCC 43068 / DSM 8971 / 11B).